A 355-amino-acid polypeptide reads, in one-letter code: Putative inositol monophosphatase 3 (355 aa).

A helical membrane pass occupies residues valine 16 to histidine 36. Mg(2+) contacts are provided by glutamate 127, aspartate 167, leucine 169, aspartate 170, and aspartate 292. Glutamate 127 contacts substrate. Substrate is bound by residues leucine 169–threonine 172 and aspartate 292.

Belongs to the inositol monophosphatase superfamily. Mg(2+) is required as a cofactor.

It is found in the membrane. It catalyses the reaction a myo-inositol phosphate + H2O = myo-inositol + phosphate. It participates in polyol metabolism; myo-inositol biosynthesis; myo-inositol from D-glucose 6-phosphate: step 2/2. The chain is Putative inositol monophosphatase 3 from Drosophila pseudoobscura pseudoobscura (Fruit fly).